The chain runs to 133 residues: Mediator of RNA polymerase II transcription subunit 10 (133 aa).

The span at 1–13 shows a compositional bias: polar residues; sequence MSTEASTGETPEF. Residues 1-28 form a disordered region; the sequence is MSTEASTGETPEFQSYDHRGSPTQEAMK. Residues 15 to 28 are compositionally biased toward basic and acidic residues; sequence SYDHRGSPTQEAMK.

This sequence belongs to the Mediator complex subunit 10 family. Component of the Mediator complex.

It localises to the nucleus. In terms of biological role, component of the Mediator complex, a coactivator involved in the regulated transcription of nearly all RNA polymerase II-dependent genes. Mediator functions as a bridge to convey information from gene-specific regulatory proteins to the basal RNA polymerase II transcription machinery. Mediator is recruited to promoters by direct interactions with regulatory proteins and serves as a scaffold for the assembly of a functional preinitiation complex with RNA polymerase II and the general transcription factors. This Phaeosphaeria nodorum (strain SN15 / ATCC MYA-4574 / FGSC 10173) (Glume blotch fungus) protein is Mediator of RNA polymerase II transcription subunit 10 (NUT2).